Here is a 250-residue protein sequence, read N- to C-terminus: Ribosomal RNA small subunit methyltransferase J (250 aa).

Residues 96 to 97 and Asp-168 each bind S-adenosyl-L-methionine; that span reads RD.

It belongs to the methyltransferase superfamily. RsmJ family.

The protein localises to the cytoplasm. It carries out the reaction guanosine(1516) in 16S rRNA + S-adenosyl-L-methionine = N(2)-methylguanosine(1516) in 16S rRNA + S-adenosyl-L-homocysteine + H(+). In terms of biological role, specifically methylates the guanosine in position 1516 of 16S rRNA. The protein is Ribosomal RNA small subunit methyltransferase J of Neisseria gonorrhoeae (strain NCCP11945).